The following is a 917-amino-acid chain: DNA mismatch repair protein spellchecker 1 (917 aa).

ATP is bound at residue 667 to 674 (GPNMGGKS).

The protein belongs to the DNA mismatch repair MutS family. In terms of assembly, heterodimer of Msh2/Spel and Msh6.

It localises to the nucleus. Functionally, involved in postreplication mismatch repair. Binds specifically to DNA containing mismatched nucleotides thus providing a target for the excision repair processes characteristic of postreplication mismatch repair. The chain is DNA mismatch repair protein spellchecker 1 (spel1) from Drosophila melanogaster (Fruit fly).